The chain runs to 265 residues: Type-1Ba cytolytic delta-endotoxin (265 aa).

The protein belongs to the cyt1/cyt2 endotoxin family. Post-translationally, active after proteolytic processing.

In terms of biological role, kills the larvae of dipteran insects by making pores in the epithelial cell membrane of the insect midgut. This chain is Type-1Ba cytolytic delta-endotoxin (cyt1Ba1), found in Bacillus thuringiensis subsp. neoleoensis.